Here is a 421-residue protein sequence, read N- to C-terminus: UDP-N-acetylglucosamine 1-carboxyvinyltransferase (421 aa).

22-23 (KN) contributes to the phosphoenolpyruvate binding site. Arginine 93 lines the UDP-N-acetyl-alpha-D-glucosamine pocket. The active-site Proton donor is cysteine 117. Cysteine 117 carries the 2-(S-cysteinyl)pyruvic acid O-phosphothioketal modification. UDP-N-acetyl-alpha-D-glucosamine contacts are provided by residues 122–126 (RPVDL), aspartate 308, and isoleucine 330.

It belongs to the EPSP synthase family. MurA subfamily.

It is found in the cytoplasm. The catalysed reaction is phosphoenolpyruvate + UDP-N-acetyl-alpha-D-glucosamine = UDP-N-acetyl-3-O-(1-carboxyvinyl)-alpha-D-glucosamine + phosphate. It functions in the pathway cell wall biogenesis; peptidoglycan biosynthesis. Functionally, cell wall formation. Adds enolpyruvyl to UDP-N-acetylglucosamine. The sequence is that of UDP-N-acetylglucosamine 1-carboxyvinyltransferase from Pseudomonas fluorescens (strain SBW25).